The primary structure comprises 66 residues: Large ribosomal subunit protein uL29 (66 aa).

Belongs to the universal ribosomal protein uL29 family.

The polypeptide is Large ribosomal subunit protein uL29 (Borrelia duttonii (strain Ly)).